The sequence spans 465 residues: Hepatocyte nuclear factor 6 (465 aa).

4 disordered regions span residues 17–55, 120–141, 264–290, and 442–465; these read SHEP…SMGM, DKFP…HQRL, LLGT…GQME, and DKWQ…CTKA. The span at 123-140 shows a compositional bias: basic residues; it reads PHHHHHHHHHHHPHHHQR. Positions 273–288 are enriched in polar residues; the sequence is PSVTGAQVSNGSNSGQ. The CUT DNA-binding region spans 283-369; it reads GSNSGQMEEI…QRMSALRLAA (87 aa). Positions 385-444 form a DNA-binding region, homeobox; the sequence is PKKPRLVFTDVQRRTLHAIFKENKRPSKELQITISQQLGLELSTVSNFFMNARRRSLDKW. Over residues 448 to 465 the composition is skewed to low complexity; sequence GSSNSGNSSSSSSTCTKA.

It belongs to the CUT homeobox family. In terms of assembly, binds DNA as a monomer. Highly expressed in liver; lower expression in testis and skin.

The protein localises to the nucleus. In terms of biological role, transcriptional activator. Binds the consensus sequence 5'-DHWATTGAYTWWD-3' on a variety of gene promoters such as those of HNF3B and TTR. Important for liver genes transcription. The chain is Hepatocyte nuclear factor 6 (ONECUT1) from Homo sapiens (Human).